A 161-amino-acid polypeptide reads, in one-letter code: Nucleotide-binding protein Reut_A2760 (161 aa).

The protein belongs to the YajQ family.

Functionally, nucleotide-binding protein. This Cupriavidus pinatubonensis (strain JMP 134 / LMG 1197) (Cupriavidus necator (strain JMP 134)) protein is Nucleotide-binding protein Reut_A2760.